The primary structure comprises 242 residues: Agamous-like MADS-box protein MADS4 (242 aa).

In terms of domain architecture, MADS-box spans 1 to 61 (MGRGRVELKR…GKLYEFCSSS (61 aa)). Residues 89-185 (ELSSQQEYLK…GTQVNQLQWN (97 aa)) form the K-box domain.

Expressed in flowers and seeds.

The protein resides in the nucleus. In terms of biological role, probable transcription factor involved in flower development. The polypeptide is Agamous-like MADS-box protein MADS4 (Vitis vinifera (Grape)).